Here is a 62-residue protein sequence, read N- to C-terminus: Probable tautomerase SH1546 (62 aa).

The active-site Proton acceptor; via imino nitrogen is the proline 2.

Belongs to the 4-oxalocrotonate tautomerase family.

The sequence is that of Probable tautomerase SH1546 from Staphylococcus haemolyticus (strain JCSC1435).